A 178-amino-acid chain; its full sequence is Large ribosomal subunit protein uL6 (178 aa).

Belongs to the universal ribosomal protein uL6 family. In terms of assembly, part of the 50S ribosomal subunit.

This protein binds to the 23S rRNA, and is important in its secondary structure. It is located near the subunit interface in the base of the L7/L12 stalk, and near the tRNA binding site of the peptidyltransferase center. The polypeptide is Large ribosomal subunit protein uL6 (Staphylococcus epidermidis (strain ATCC 35984 / DSM 28319 / BCRC 17069 / CCUG 31568 / BM 3577 / RP62A)).